The chain runs to 238 residues: Response regulator receiver protein Anae109_2439 (238 aa).

Response regulatory domains follow at residues 3 to 117 and 121 to 228; these read RYLI…AAAR and LVAV…ERLH. 2 positions are modified to 4-aspartylphosphate: Asp52 and Asp169.

In terms of processing, is diphosphorylated by GchK.

Its function is as follows. Member of the two-component regulatory system GcHK/Anae109_2439. Is involved in a signal transduction system responding to oxygen availability. The chain is Response regulator receiver protein Anae109_2439 from Anaeromyxobacter sp. (strain Fw109-5).